A 591-amino-acid chain; its full sequence is V-type ATP synthase alpha chain (591 aa).

231–238 is a binding site for ATP; the sequence is GPFGSGKT.

Belongs to the ATPase alpha/beta chains family.

It carries out the reaction ATP + H2O + 4 H(+)(in) = ADP + phosphate + 5 H(+)(out). Its function is as follows. Produces ATP from ADP in the presence of a proton gradient across the membrane. The V-type alpha chain is a catalytic subunit. This is V-type ATP synthase alpha chain from Clostridium novyi (strain NT).